The primary structure comprises 62 residues: Pro-MCH variant (62 aa).

The NGE-like stretch occupies residues Gly23–Glu41. Positions Ala29–Asp62 are disordered. The tract at residues Glu44 to Ile56 is NEI-like. Positions Asp60–Asp62 are melanin-concentrating hormone-like.

The protein belongs to the melanin-concentrating hormone family.

In Pan paniscus (Pygmy chimpanzee), this protein is Pro-MCH variant (PMCHL1).